We begin with the raw amino-acid sequence, 246 residues long: Azurocidin (246 aa).

The N-terminal stretch at 1–19 (MPALRFLALLASLLATSRV) is a signal peptide. The propeptide occupies 20–26 (GLATLAD). The Peptidase S1 domain occupies 27 to 242 (IVGGRRAQPQ…FRNWIDSVLN (216 aa)). An intrachain disulfide couples cysteine 52 to cysteine 68. 2 N-linked (GlcNAc...) asparagine glycosylation sites follow: asparagine 139 and asparagine 170. 2 disulfides stabilise this stretch: cysteine 148–cysteine 205 and cysteine 178–cysteine 184. The propeptide occupies 245–246 (PA).

Belongs to the peptidase S1 family. Elastase subfamily.

The protein resides in the cytoplasmic granule membrane. In terms of biological role, this is a neutrophil granule-derived antibacterial and monocyte- and fibroblast-specific chemotactic glycoprotein. Binds heparin. This is Azurocidin from Sus scrofa (Pig).